Here is a 1088-residue protein sequence, read N- to C-terminus: RNA-directed RNA polymerase (1088 aa).

The RdRp catalytic domain occupies L501 to I687.

Belongs to the reoviridae RNA-directed RNA polymerase family. In terms of assembly, interacts with VP3 (Potential). Interacts with VP2; this interaction activates VP1. Interacts with NSP5; this interaction is probably necessary for the formation of functional virus factories. Interacts with NSP2; this interaction is weak. Mg(2+) serves as cofactor.

Its subcellular location is the virion. The enzyme catalyses RNA(n) + a ribonucleoside 5'-triphosphate = RNA(n+1) + diphosphate. RNA-directed RNA polymerase that is involved in both transcription and genome replication. Together with VP3 capping enzyme, forms an enzyme complex positioned near the channels situated at each of the five-fold vertices of the core. Following infection, the outermost layer of the virus is lost, leaving a double-layered particle (DLP) made up of the core and VP6 shell. VP1 then catalyzes the transcription of fully conservative plus-strand genomic RNAs that are extruded through the DLP's channels into the cytoplasm where they function as mRNAs for translation of viral proteins. One copy of each of the viral (+)RNAs is also recruited during core assembly, together with newly synthesized polymerase complexes and VP2. The polymerase of these novo-formed particles catalyzes the synthesis of complementary minus-strands leading to dsRNA formation. To do so, the polymerase specifically recognizes and binds 4 bases 5'-UGUG-3' in the conserved 3'-sequence of plus-strand RNA templates. VP2 presumably activates the autoinhibited VP1-RNA complex to coordinate packaging and genome replication. Once dsRNA synthesis is complete, the polymerase switches to the transcriptional mode, thus providing secondary transcription. The chain is RNA-directed RNA polymerase from Homo sapiens (Human).